A 316-amino-acid chain; its full sequence is Membrane protein UL148 (316 aa).

An N-terminal signal peptide occupies residues 1-20 (MLRLLFTLVLLALYGPSVDA). A helical transmembrane segment spans residues 286 to 308 (FIVQYLNTLLITMMAAIWARVLI).

As to quaternary structure, interacts with host SEL1L.

Its subcellular location is the host endoplasmic reticulum membrane. Functionally, chaperone protein that plays an important role in HCMV tropism. Cooperates with UL116 to regulate the abundance of gH-gL complexes in virion. Favors the incorporation of gL into virions once UL116 has regulated the early folding steps of virion assembly. Interacts with the host ERAD machinery and slows gO decay which would otherwise be constitutively degraded. Reorganizes the host endoplasmic reticulum and activates the unfolded protein response. Additionally, plays a role in the evasion of antiviral immune response by down-regulating cell surface expression of host CD58. Mechanistically, interacts with host CD58 and retains its immature form intracellularly. The capacity to cause endoplasmic reticulum reorganization and the intracellular retention of host CD58 are functionally independent properties. This is Membrane protein UL148 (UL148) from Human cytomegalovirus (strain Merlin) (HHV-5).